We begin with the raw amino-acid sequence, 282 residues long: Trihydroxynaphthalene reductase (282 aa).

3 residues coordinate NADP(+): isoleucine 41, asparagine 114, and arginine 147. Active-site proton donor residues include serine 164 and tyrosine 178. The NADP(+) site is built by tyrosine 178, lysine 182, isoleucine 211, and threonine 213. Residue lysine 182 is the Lowers pKa of active site Tyr of the active site.

It belongs to the short-chain dehydrogenases/reductases (SDR) family. In terms of assembly, homotetramer.

It functions in the pathway pigment biosynthesis; melanin biosynthesis. Catalyzes the NADPH-dependent reduction of 1,3,8-trihydroxynaphthalene (T3HN) into (-)-vermelone. Essential for appressorial penetration of colletotrichum lagenarium. The polypeptide is Trihydroxynaphthalene reductase (THR1) (Colletotrichum orbiculare (strain 104-T / ATCC 96160 / CBS 514.97 / LARS 414 / MAFF 240422) (Cucumber anthracnose fungus)).